The primary structure comprises 156 residues: Neuroactive polyprotein R15 (156 aa).

A signal peptide spans Met1–Leu26. A propeptide spanning residues Pro27–Ser48 is cleaved from the precursor. Cys74 and Cys81 are oxidised to a cystine. Residue Gln120 is modified to Pyrrolidone carboxylic acid.

As to expression, expressed within the abdominal ganglion in neurons R15, RB(HE), the two L9(G) gill motoneurons, and L40 interneuron, all are parts of autonomic control circuit that contributes to implementing a central command to coordinate autonomic activity with escape locomotion.

The protein resides in the secreted. In terms of biological role, the alpha-1 peptide acts as an osmoregulatory peptide, increasing blood volume, and also modulates the activity of a set of cardiac motor neurons that control heart rate. This Aplysia californica (California sea hare) protein is Neuroactive polyprotein R15.